We begin with the raw amino-acid sequence, 185 residues long: Ribosome-recycling factor (185 aa).

It belongs to the RRF family.

It localises to the cytoplasm. Its function is as follows. Responsible for the release of ribosomes from messenger RNA at the termination of protein biosynthesis. May increase the efficiency of translation by recycling ribosomes from one round of translation to another. The chain is Ribosome-recycling factor from Thermotoga sp. (strain RQ2).